The sequence spans 185 residues: Large ribosomal subunit protein uL5 (185 aa).

This sequence belongs to the universal ribosomal protein uL5 family. In terms of assembly, part of the 50S ribosomal subunit; part of the 5S rRNA/L5/L18/L25 subcomplex. Contacts the 5S rRNA and the P site tRNA. Forms a bridge to the 30S subunit in the 70S ribosome.

This is one of the proteins that bind and probably mediate the attachment of the 5S RNA into the large ribosomal subunit, where it forms part of the central protuberance. In the 70S ribosome it contacts protein S13 of the 30S subunit (bridge B1b), connecting the 2 subunits; this bridge is implicated in subunit movement. Contacts the P site tRNA; the 5S rRNA and some of its associated proteins might help stabilize positioning of ribosome-bound tRNAs. This chain is Large ribosomal subunit protein uL5, found in Streptomyces avermitilis (strain ATCC 31267 / DSM 46492 / JCM 5070 / NBRC 14893 / NCIMB 12804 / NRRL 8165 / MA-4680).